The primary structure comprises 205 residues: Ribosomal RNA small subunit methyltransferase G 1 (205 aa).

S-adenosyl-L-methionine contacts are provided by residues Gly77, Leu82, 100 to 102 (EKS), 129 to 130 (LE), and Arg138.

The protein belongs to the methyltransferase superfamily. RNA methyltransferase RsmG family.

The protein resides in the cytoplasm. It catalyses the reaction guanosine(527) in 16S rRNA + S-adenosyl-L-methionine = N(7)-methylguanosine(527) in 16S rRNA + S-adenosyl-L-homocysteine. Its function is as follows. Specifically methylates the N7 position of guanine in position 527 of 16S rRNA. The sequence is that of Ribosomal RNA small subunit methyltransferase G 1 from Bdellovibrio bacteriovorus (strain ATCC 15356 / DSM 50701 / NCIMB 9529 / HD100).